We begin with the raw amino-acid sequence, 360 residues long: Phenylalanine--tRNA ligase alpha subunit (360 aa).

Glu-260 contacts Mg(2+).

The protein belongs to the class-II aminoacyl-tRNA synthetase family. Phe-tRNA synthetase alpha subunit type 1 subfamily. Tetramer of two alpha and two beta subunits. Requires Mg(2+) as cofactor.

Its subcellular location is the cytoplasm. The catalysed reaction is tRNA(Phe) + L-phenylalanine + ATP = L-phenylalanyl-tRNA(Phe) + AMP + diphosphate + H(+). This is Phenylalanine--tRNA ligase alpha subunit from Bradyrhizobium sp. (strain ORS 278).